The following is a 227-amino-acid chain: Cytidylate kinase (227 aa).

12-20 (GPGGAGKGT) is an ATP binding site.

The protein belongs to the cytidylate kinase family. Type 1 subfamily.

The protein localises to the cytoplasm. It carries out the reaction CMP + ATP = CDP + ADP. The enzyme catalyses dCMP + ATP = dCDP + ADP. The chain is Cytidylate kinase from Klebsiella pneumoniae (strain 342).